The sequence spans 105 residues: Large ribosomal subunit protein uL24 (105 aa).

Belongs to the universal ribosomal protein uL24 family. Part of the 50S ribosomal subunit.

One of two assembly initiator proteins, it binds directly to the 5'-end of the 23S rRNA, where it nucleates assembly of the 50S subunit. Its function is as follows. One of the proteins that surrounds the polypeptide exit tunnel on the outside of the subunit. This chain is Large ribosomal subunit protein uL24, found in Aeromonas salmonicida (strain A449).